The primary structure comprises 943 residues: AP-1 complex subunit beta-1 (943 aa).

At K318 the chain carries N6-acetyllysine. 3'-nitrotyrosine is present on Y574. The interval 584–621 is disordered; the sequence is GGRGVVHKSLPPRTASSESTESPETAPAGAPAGDQPDV. Low complexity predominate over residues 594-616; it reads PPRTASSESTESPETAPAGAPAG.

This sequence belongs to the adaptor complexes large subunit family. As to quaternary structure, adaptor protein complex 1 (AP-1) is a heterotetramer composed of two large adaptins (gamma-type subunit AP1G1 and beta-type subunit AP1B1), a medium adaptin (mu-type subunit AP1M1 or AP1M2) and a small adaptin (sigma-type subunit AP1S1 or AP1S2 or AP1S3). Widely expressed.

It is found in the cytoplasmic vesicle. The protein localises to the clathrin-coated vesicle membrane. It localises to the golgi apparatus. In terms of biological role, subunit of clathrin-associated adaptor protein complex 1 that plays a role in protein sorting in the late-Golgi/trans-Golgi network (TGN) and/or endosomes. The AP complexes mediate both the recruitment of clathrin to membranes and the recognition of sorting signals within the cytosolic tails of transmembrane cargo molecules. This chain is AP-1 complex subunit beta-1 (Ap1b1), found in Mus musculus (Mouse).